Reading from the N-terminus, the 539-residue chain is Chitin deacetylase 1 (539 aa).

The first 23 residues, Met1–Gly23, serve as a signal peptide directing secretion. The 63-residue stretch at Gln42–Leu104 folds into the Chitin-binding type-2 domain. Disulfide bonds link Cys80–Cys93, Cys122–Cys134, Cys129–Cys147, Cys141–Cys156, Cys168–Cys180, and Cys173–Cys178. The LDL-receptor class A domain occupies Leu121–Asp157. Position 206 (Asp206) interacts with Zn(2+). 5 disulfide bridges follow: Cys230–Cys489, Cys354–Cys361, Cys391–Cys397, Cys497–Cys520, and Cys503–Cys523. Asn244 is a glycosylation site (N-linked (GlcNAc...) asparagine). Zn(2+)-binding residues include His261 and His265. Asn296 is a glycosylation site (N-linked (GlcNAc...) asparagine).

The protein belongs to the carbohydrate esterase 4 (CE4) family. Interacts with CPAP3-A1. Zn(2+) is required as a cofactor. Highly expressed in epidermis and head. Moderate expression levels in fat body, Malpighian tubule, testis and midgut. Low expression in silk gland and ovary.

The protein resides in the secreted. It catalyses the reaction [(1-&gt;4)-N-acetyl-beta-D-glucosaminyl](n) + n H2O = chitosan + n acetate. Binding to the accessory protein CPAP3-A1 is essential for chitinase activity. In terms of biological role, hydrolyzes the N-acetamido groups of N-acetyl-D-glucosamine residues in chitin. This chain is Chitin deacetylase 1, found in Bombyx mori (Silk moth).